The chain runs to 101 residues: uncharacterized protein (101 aa).

Positions 1–18 (MSINALLYVLSLALLIWT) are cleaved as a signal peptide. Residues 62-82 (FQFDSIPSSSLSLSPFPFLFF) form a helical membrane-spanning segment.

Its subcellular location is the membrane. This is an uncharacterized protein from Saccharomyces cerevisiae (strain ATCC 204508 / S288c) (Baker's yeast).